The primary structure comprises 168 residues: ASQKRPSQRHGSKYLATASTMDHARHGFLPRHRDTGILDSIGRFFSSDRGAPKRGSGKDHAARTTHYGSLPQKSGHRPQDENPVVHFFKNIVTPRTPPPSQGKGRGTVLSRFSWGAEGQKPGFGYGGRAADYKSAHKGLKGADAQGTLSRLFKLGGRDSRSGSPMARR.

An N-acetylalanine modification is found at alanine 1. Residues serine 7 and serine 12 each carry the phosphoserine modification. Tyrosine 14 is subject to Phosphotyrosine. Position 17 is a phosphothreonine (threonine 17). Serine 19 bears the Phosphoserine mark. Phosphothreonine is present on threonine 20. Arginine 25 and arginine 31 each carry citrulline. A Phosphothreonine modification is found at threonine 35. At serine 40 the chain carries Phosphoserine. The disordered stretch occupies residues 42–84; that stretch reads GRFFSSDRGAPKRGSGKDHAARTTHYGSLPQKSGHRPQDENPV. 2 positions are modified to omega-N-methylarginine: arginine 43 and arginine 49. Positions 45-86 are induces experimental autoimmune encephalomyelitis (EAE); it reads FSSDRGAPKRGSGKDHAARTTHYGSLPQKSGHRPQDENPVVH. Serine 56 is subject to Phosphoserine. Threonine 65 carries the post-translational modification Phosphothreonine. Tyrosine 67 bears the Phosphotyrosine mark. Serine 74 carries the post-translational modification Phosphoserine. Phosphothreonine is present on residues threonine 93 and threonine 96. At glutamine 101 the chain carries Deamidated glutamine; partial. Position 105 is an omega-N-methylarginine; alternate (arginine 105). A Symmetric dimethylarginine; alternate modification is found at arginine 105. Serine 113 carries the phosphoserine modification. The residue at position 120 (lysine 120) is an N6-acetyllysine. Residue arginine 128 is modified to Citrulline. Deamidated glutamine is present on glutamine 145. Residue arginine 157 is modified to Citrulline. A Phosphoserine modification is found at serine 159. The residue at position 163 (serine 163) is a Phosphoserine; by UHMK1. Arginine 168 carries the citrulline modification.

This sequence belongs to the myelin basic protein family. In terms of assembly, homodimer. Post-translationally, as in other animals, several charge isomers may be produced as a result of optional post-translational modifications, such as phosphorylation of serine or threonine residues, deamidation of glutamine or asparagine residues, citrullination and methylation of arginine residues. Phosphorylated by TAOK2, VRK2, MAPK11, MAPK12, MAPK14 and MINK1. In terms of processing, proteolytically cleaved in B cell lysosomes by cathepsin CTSG which degrades the major immunogenic MBP epitope and prevents the activation of MBP-specific autoreactive T cells. In terms of tissue distribution, found in both the central and the peripheral nervous system.

Its subcellular location is the myelin membrane. Functionally, is, with PLP, the most abundant protein component of the myelin membrane in the CNS. Has a role in both the formation and stabilization of this compact multilayer arrangement of bilayers. Each splice variant and charge isomer may have a specialized function in the assembly of an optimized, biochemically functional myelin membrane. This chain is Myelin basic protein (MBP), found in Oryctolagus cuniculus (Rabbit).